The chain runs to 554 residues: Phosphomethylpyrimidine synthase (554 aa).

Substrate is bound by residues N188, M217, Y246, H282, 302 to 304 (SRG), 343 to 346 (DGLR), and E382. Position 386 (H386) interacts with Zn(2+). Residue Y409 coordinates substrate. Zn(2+) is bound at residue H450. [4Fe-4S] cluster is bound by residues C530, C533, and C538.

This sequence belongs to the ThiC family. As to quaternary structure, homodimer. The cofactor is [4Fe-4S] cluster.

The enzyme catalyses 5-amino-1-(5-phospho-beta-D-ribosyl)imidazole + S-adenosyl-L-methionine = 4-amino-2-methyl-5-(phosphooxymethyl)pyrimidine + CO + 5'-deoxyadenosine + formate + L-methionine + 3 H(+). It functions in the pathway cofactor biosynthesis; thiamine diphosphate biosynthesis. Catalyzes the synthesis of the hydroxymethylpyrimidine phosphate (HMP-P) moiety of thiamine from aminoimidazole ribotide (AIR) in a radical S-adenosyl-L-methionine (SAM)-dependent reaction. The sequence is that of Phosphomethylpyrimidine synthase from Coxiella burnetii (strain RSA 493 / Nine Mile phase I).